Reading from the N-terminus, the 389-residue chain is Apicidin F cluster transcription factor apf2 (389 aa).

Polar residues-rich tracts occupy residues 1–13 and 75–84; these read MSPP…TITD and PDSATPKPSL. Disordered regions lie at residues 1 to 27, 65 to 84, and 219 to 239; these read MSPP…VAQR, PQSV…KPSL, and EVPN…TKQP. Positions 12 to 38 are basic DNA-binding region; that stretch reads TDANERRKAQNRVAQRNYRSRQKLRVE. ANK repeat units lie at residues 241 to 270, 274 to 303, 307 to 336, and 357 to 386; these read EFKT…NIDT, HGRT…DLLM, SGVT…QQDR, and QNMT…DVNI.

The protein belongs to the bZIP family. Highly divergent.

Its subcellular location is the nucleus. Functionally, transcription factor that regulates the expression of the gene cluster that mediates the biosynthesis of apicidin F. Binds to the eight-base-pair motif 5'-TGACGTGA-3' called the 'Api-box' that is found in all promoters of the apicidin F cluster except in the promoter region of apf2 itself. The polypeptide is Apicidin F cluster transcription factor apf2 (Gibberella fujikuroi (strain CBS 195.34 / IMI 58289 / NRRL A-6831) (Bakanae and foot rot disease fungus)).